The following is a 96-amino-acid chain: Non-specific lipid-transfer protein 2 (96 aa).

Residues 1 to 27 (MMRKLAVLVLAVAMVAACGGGVVGVAG) form the signal peptide. 4 cysteine pairs are disulfide-bonded: Cys30–Cys62, Cys38–Cys52, Cys53–Cys88, and Cys64–Cys95.

Transfer lipids across membranes. May play a role in plant defense or in the biosynthesis of cuticle layers. This Oryza sativa subsp. japonica (Rice) protein is Non-specific lipid-transfer protein 2 (LTP-2).